The chain runs to 727 residues: ADP-ribosylation factor-binding protein GGA3 (727 aa).

The VHS domain maps to 16–146; sequence ATNPSNRQED…MLKRQGIVQS (131 aa). 2 positions are modified to phosphoserine: Ser-159 and Ser-275. The region spanning 171–298 is the GAT domain; it reads DEEKSKLLAK…VINSYKTIIE (128 aa). Residues 299–597 form a unstructured hinge region; that stretch reads GQIINGEVTT…VHVPLESIKP (299 aa). The tract at residues 334–385 is disordered; the sequence is TPSSSSPVLAPAPAPPTSGIPILPPPPQTSGPPRSRSSSQAEAPSGPDSTNN. Pro residues predominate over residues 343-363; sequence APAPAPPTSGIPILPPPPQTS. Over residues 364-374 the composition is skewed to low complexity; that stretch reads GPPRSRSSSQA. Positions 391–395 match the DXXLL motif; the sequence is DEELL. A disordered region spans residues 400-419; it reads SDPAPTAPKESAGNSPWHLF. A GAE domain is found at 598–719; the sequence is SSALPVTAYD…TELGEVDQFP (122 aa).

Belongs to the GGA protein family. In terms of assembly, monomer. Interacts with GGA1 and GGA2. Binds to clathrin and activated ARFs, such as ARF1, ARF5 and ARF6. Binds RABEP1 and RABGEF1. Interacts with the membrane proteins M6PR/CD-MPR and IGF2R/CI-MPR and the accessory proteins SYNRG, EPN4, NECAP1, NECAP2 and AFTPH/aftiphilin. Interacts with TSG101 and UBC. Interacts with ADRA2B. Interacts with NTRK1; the interaction is independent of NTRK1 activation and ubiquitination. Interacts (via VHS domain) with BACE1 (via DXXLL motif). Phosphorylated by CK2 and dephosphorylated by PP2A. Phosphorylation of GGA3 allows the internal DXXLL motif to bind the VHS domain and to inhibit the recognition of cargo signals. Post-translationally, ubiquitinated. In terms of processing, proteolytically cleaved during apoptosis by CASP3.

It is found in the golgi apparatus. It localises to the trans-Golgi network membrane. The protein localises to the endosome membrane. Its subcellular location is the early endosome membrane. The protein resides in the recycling endosome membrane. Functionally, plays a role in protein sorting and trafficking between the trans-Golgi network (TGN) and endosomes. Mediates the ARF-dependent recruitment of clathrin to the TGN and binds ubiquitinated proteins and membrane cargo molecules with a cytosolic acidic cluster-dileucine (DXXLL) motif. Mediates export of the GPCR receptor ADRA2B to the cell surface. Involved in BACE1 transport and sorting as well as regulation of BACE1 protein levels. Regulates retrograde transport of BACE1 from endosomes to the trans-Golgi network via interaction through the VHS motif and dependent of BACE1 phosphorylation. Modulates BACE1 protein levels independently of the interaction between VHS domain and DXXLL motif through recognition of ubiquitination. Key player in a novel DXXLL-mediated endosomal sorting machinery to the recycling pathway that targets NTRK1 to the plasma membrane. In Rattus norvegicus (Rat), this protein is ADP-ribosylation factor-binding protein GGA3.